The following is a 586-amino-acid chain: Exocyst complex component EXO70A3 (586 aa).

N-linked (GlcNAc...) asparagine glycans are attached at residues N65 and N106. Residues C119–D149 are disordered. The chain crosses the membrane as a helical span at residues F258–I278. N-linked (GlcNAc...) asparagine glycans are attached at residues N321 and N487.

The protein belongs to the EXO70 family. As to quaternary structure, subunit of the exocyst complex. In terms of tissue distribution, confined to the outer layer of the columella cells in the root tips of young seedlings.

It is found in the membrane. In terms of biological role, component of the exocyst complex involved in the docking of exocytic vesicles with fusion sites on the plasma membrane during regulated or polarized secretion. Involved in PIN4 exocytosis and gravitropic responses in columella cells. By monitoring PIN4 distribution in columella cells, modulates auxin repartition and subsequently regulates the root system architecture (RSA), thus being a component of the auxin-dependent root directional growth (ARD). The polypeptide is Exocyst complex component EXO70A3 (Arabidopsis thaliana (Mouse-ear cress)).